The chain runs to 281 residues: N-acetyltransferase ECO1 (281 aa).

Residues 33 to 57 (VKCDKCEMSYSSTSIEDRAIHEKYH) form a CCHH-type zinc finger. The tract at residues 86 to 105 (LSRSTGTITPLNSSPLKKSS) is disordered. The segment covering 95–105 (PLNSSPLKKSS) has biased composition (low complexity). Lys-223 is modified (N6-acetyllysine; by autocatalysis).

Belongs to the acetyltransferase family. ECO subfamily. In terms of assembly, binds specifically to CHL12, RFC1, RFC2, RFC3, RFC4, RFC5 and RAD24 when members of an RFC complex. Interacts with CHL1 and MPS3. Autoacetylates in vitro.

It localises to the nucleus. Its function is as follows. Required for establishment of sister chromatid cohesion during S phase but not for its further maintenance during G2 or M phases or for loading the cohesin complex onto DNA. Interacts with the three known alternate replication factor C (RFC) complexes, suggesting that these complexes have essential but redundant activity in cohesion establishment. Acts by acetylating the cohesin complex component SMC3. In vitro, possesses acetyltransferase activity where it can acetylate itself and components of the cohesin complex (MCD1, IRR1 and PDS5), but is unable to acetylate histones. The polypeptide is N-acetyltransferase ECO1 (ECO1) (Saccharomyces cerevisiae (strain ATCC 204508 / S288c) (Baker's yeast)).